Consider the following 198-residue polypeptide: Segregation and condensation protein B (198 aa).

The interval proline 167–glutamate 198 is disordered. The segment covering proline 172–glutamate 181 has biased composition (acidic residues).

This sequence belongs to the ScpB family. In terms of assembly, homodimer. Homodimerization may be required to stabilize the binding of ScpA to the Smc head domains. Component of a cohesin-like complex composed of ScpA, ScpB and the Smc homodimer, in which ScpA and ScpB bind to the head domain of Smc. The presence of the three proteins is required for the association of the complex with DNA.

It is found in the cytoplasm. Its function is as follows. Participates in chromosomal partition during cell division. May act via the formation of a condensin-like complex containing Smc and ScpA that pull DNA away from mid-cell into both cell halves. In Listeria innocua serovar 6a (strain ATCC BAA-680 / CLIP 11262), this protein is Segregation and condensation protein B.